The chain runs to 124 residues: Glycine cleavage system H protein (124 aa).

A Lipoyl-binding domain is found at 22-104; sequence LVITGITDHA…YGKGWIYKIK (83 aa). Lys63 is subject to N6-lipoyllysine.

The protein belongs to the GcvH family. The glycine cleavage system is composed of four proteins: P, T, L and H. Requires (R)-lipoate as cofactor.

Functionally, the glycine cleavage system catalyzes the degradation of glycine. The H protein shuttles the methylamine group of glycine from the P protein to the T protein. The sequence is that of Glycine cleavage system H protein from Acinetobacter baumannii (strain ACICU).